The sequence spans 420 residues: UDP-N-acetylglucosamine 1-carboxyvinyltransferase (420 aa).

Lysine 23–asparagine 24 contributes to the phosphoenolpyruvate binding site. Position 92 (arginine 92) interacts with UDP-N-acetyl-alpha-D-glucosamine. Cysteine 116 functions as the Proton donor in the catalytic mechanism. A 2-(S-cysteinyl)pyruvic acid O-phosphothioketal modification is found at cysteine 116. UDP-N-acetyl-alpha-D-glucosamine-binding positions include arginine 121 to leucine 125, lysine 161 to valine 164, aspartate 306, and isoleucine 328.

This sequence belongs to the EPSP synthase family. MurA subfamily.

The protein localises to the cytoplasm. The enzyme catalyses phosphoenolpyruvate + UDP-N-acetyl-alpha-D-glucosamine = UDP-N-acetyl-3-O-(1-carboxyvinyl)-alpha-D-glucosamine + phosphate. It functions in the pathway cell wall biogenesis; peptidoglycan biosynthesis. Functionally, cell wall formation. Adds enolpyruvyl to UDP-N-acetylglucosamine. This is UDP-N-acetylglucosamine 1-carboxyvinyltransferase from Photobacterium profundum (strain SS9).